A 380-amino-acid chain; its full sequence is RNA-binding motif protein, Y chromosome, family 9 (380 aa).

Residues 8 to 86 (GKIFIGGLNI…KRIKVKQARR (79 aa)) enclose the RRM domain. 2 disordered regions span residues 82-226 (KQAR…STSR) and 279-358 (HEAP…YSAS). Residues 166–178 (RSATSAQTRSNTG) show a composition bias toward polar residues. Composition is skewed to basic and acidic residues over residues 180–190 (RGREPHRREIS) and 333–351 (IDREYFDREGRQERGHSPK).

As to expression, testis-specific.

Its subcellular location is the nucleus. In terms of biological role, RNA-binding protein which may be involved in spermatogenesis. May be required for sperm development, possibly by participating in pre-mRNA splicing in the testis. This chain is RNA-binding motif protein, Y chromosome, family 9, found in Mus musculus (Mouse).